We begin with the raw amino-acid sequence, 675 residues long: DNA ligase (675 aa).

NAD(+) contacts are provided by residues 35 to 39 (DSEYD), 84 to 85 (SL), and glutamate 115. Lysine 117 functions as the N6-AMP-lysine intermediate in the catalytic mechanism. NAD(+) contacts are provided by arginine 138, glutamate 175, lysine 292, and lysine 316. Zn(2+) is bound by residues cysteine 410, cysteine 413, cysteine 428, and cysteine 434. Residues 593 to 675 (QIVQPLLGRT…RNFLDDTSFP (83 aa)) enclose the BRCT domain.

It belongs to the NAD-dependent DNA ligase family. LigA subfamily. Requires Mg(2+) as cofactor. Mn(2+) serves as cofactor.

The catalysed reaction is NAD(+) + (deoxyribonucleotide)n-3'-hydroxyl + 5'-phospho-(deoxyribonucleotide)m = (deoxyribonucleotide)n+m + AMP + beta-nicotinamide D-nucleotide.. Functionally, DNA ligase that catalyzes the formation of phosphodiester linkages between 5'-phosphoryl and 3'-hydroxyl groups in double-stranded DNA using NAD as a coenzyme and as the energy source for the reaction. It is essential for DNA replication and repair of damaged DNA. The sequence is that of DNA ligase from Nitrosococcus oceani (strain ATCC 19707 / BCRC 17464 / JCM 30415 / NCIMB 11848 / C-107).